A 182-amino-acid chain; its full sequence is Nudix hydrolase 17, mitochondrial (182 aa).

A mitochondrion-targeting transit peptide spans 1-26 (MGVEKMVCLASRTGRQFQRYNKGRRQ). Positions 27–158 (VVGCVPYRFK…WMKEALDVLV (132 aa)) constitute a Nudix hydrolase domain. Residues 65-86 (GGWELDESVEEAASRECLEEAG) carry the Nudix box motif. Residues Glu-80 and Glu-84 each coordinate Mg(2+).

Belongs to the Nudix hydrolase family. The cofactor is Mg(2+). It depends on Mn(2+) as a cofactor. Expressed in roots, leaves, stems and inflorescences.

The protein localises to the mitochondrion. In terms of biological role, probably mediates the hydrolysis of some nucleoside diphosphate derivatives. This is Nudix hydrolase 17, mitochondrial (NUDT17) from Arabidopsis thaliana (Mouse-ear cress).